Here is a 634-residue protein sequence, read N- to C-terminus: DNA-directed RNA polymerase subunit gamma (634 aa).

Cys74, Cys76, Cys89, and Cys92 together coordinate Zn(2+). Mg(2+) contacts are provided by Asp471, Asp473, and Asp475.

The protein belongs to the RNA polymerase beta' chain family. RpoC1 subfamily. In cyanobacteria the RNAP catalytic core is composed of 2 alpha, 1 beta, 1 beta', 1 gamma and 1 omega subunit. When a sigma factor is associated with the core the holoenzyme is formed, which can initiate transcription. The cofactor is Mg(2+). Zn(2+) serves as cofactor.

It catalyses the reaction RNA(n) + a ribonucleoside 5'-triphosphate = RNA(n+1) + diphosphate. In terms of biological role, DNA-dependent RNA polymerase catalyzes the transcription of DNA into RNA using the four ribonucleoside triphosphates as substrates. The sequence is that of DNA-directed RNA polymerase subunit gamma from Parasynechococcus marenigrum (strain WH8102).